We begin with the raw amino-acid sequence, 177 residues long: Large ribosomal subunit protein uL5m (177 aa).

The protein belongs to the universal ribosomal protein uL5 family.

It is found in the mitochondrion. This is Large ribosomal subunit protein uL5m (RPL5) from Acanthamoeba castellanii (Amoeba).